Reading from the N-terminus, the 445-residue chain is Phosphoglucosamine mutase (445 aa).

Residue S105 is the Phosphoserine intermediate of the active site. The Mg(2+) site is built by S105, D244, D246, and D248. S105 bears the Phosphoserine mark.

This sequence belongs to the phosphohexose mutase family. The cofactor is Mg(2+). In terms of processing, activated by phosphorylation.

It catalyses the reaction alpha-D-glucosamine 1-phosphate = D-glucosamine 6-phosphate. Its function is as follows. Catalyzes the conversion of glucosamine-6-phosphate to glucosamine-1-phosphate. The chain is Phosphoglucosamine mutase from Janthinobacterium sp. (strain Marseille) (Minibacterium massiliensis).